A 193-amino-acid chain; its full sequence is uncharacterized protein (193 aa).

This is an uncharacterized protein from Dictyostelium discoideum (Social amoeba).